The primary structure comprises 78 residues: Defensin-like protein 149 (78 aa).

Residues 1–25 (MMKKLIQLSFTVMIIFTILVLGVVA) form the signal peptide. 4 disulfide bridges follow: Cys-36–Cys-77, Cys-45–Cys-65, Cys-50–Cys-71, and Cys-54–Cys-73.

It belongs to the DEFL family.

It is found in the secreted. The protein is Defensin-like protein 149 (LCR5) of Arabidopsis thaliana (Mouse-ear cress).